The following is a 217-amino-acid chain: Polyadenylate-binding protein 3 (217 aa).

Residues methionine 1–methionine 28 form a disordered region. The segment covering glutamate 15–methionine 28 has biased composition (acidic residues). Residues alanine 30–glutamine 71 are a coiled coil. The segment at serine 75–tyrosine 216 is necessary for homooligomerization. In terms of domain architecture, RRM spans arginine 89–threonine 165. The Nuclear localization signal signature appears at proline 162–glycine 169.

As to quaternary structure, monomer and homooligomer. Binds RNA as a monomer and oligomerizes when bound to poly(A). Forms a complex with cleavage and polyadenylation specificity factor (CPSF) subunits PAPS4, PABN1, PABN2, CSTF50 and FIPS5. Interacts with CSP3.

The protein localises to the nucleus speckle. The protein resides in the cytoplasm. Involved in the 3'-end formation of mRNA precursors (pre-mRNA) by the addition of a poly(A) tail of 200-250 nt to the upstream cleavage product. Stimulates poly(A) polymerase (PAPOLA) conferring processivity on the poly(A) tail elongation reaction and also controls the poly(A) tail length. Increases the affinity of poly(A) polymerase for RNA. Binds to poly(A) and to poly(G) with high affinity. May protect the poly(A) tail from degradation. The polypeptide is Polyadenylate-binding protein 3 (Arabidopsis thaliana (Mouse-ear cress)).